The sequence spans 275 residues: uncharacterized protein (275 aa).

Disordered stretches follow at residues 1 to 25 and 185 to 275; these read MIGG…DQEQ and QRGE…RHHM. Residues 228–239 are compositionally biased toward basic and acidic residues; the sequence is KPGDGEENAKDD.

This is an uncharacterized protein from Neurospora crassa (strain ATCC 24698 / 74-OR23-1A / CBS 708.71 / DSM 1257 / FGSC 987).